Consider the following 185-residue polypeptide: Protein TIFY 5 (185 aa).

Residues 38–72 (AAEARRNLTIFYNGRMCAVNVTELQARTIISMASQ) enclose the Tify domain. Residues 77-185 (KQQQQQIQGR…RAAAPLYARR (109 aa)) form a disordered region. Residues 137 to 157 (PRAGLQAAAAAAPTMNQPPAA) are compositionally biased toward low complexity. The short motif at 155–182 (PAASGLSMKRSLQRFLEKRKTRAAAPLY) is the Jas element. Positions 162–169 (MKRSLQRF) match the Nuclear localization signal motif.

It belongs to the TIFY/JAZ family. In terms of processing, ubiquitinated. Targeted for degradation by the SCF(COI1) E3 ubiquitin ligase-proteasome pathway during jasmonate signaling.

Its subcellular location is the nucleus. Functionally, repressor of jasmonate responses. The polypeptide is Protein TIFY 5 (Oryza sativa subsp. indica (Rice)).